We begin with the raw amino-acid sequence, 239 residues long: Cysteine-rich venom protein natrin-1 (239 aa).

A signal peptide spans 1-18; that stretch reads MIAFSLLCFAAVLQQSFG. The region spanning 37 to 165 is the SCP domain; that stretch reads VDLHNSLRRR…AWSYFYVCQY (129 aa). 8 disulfide bridges follow: Cys-74/Cys-152, Cys-91/Cys-166, Cys-147/Cys-163, Cys-185/Cys-192, Cys-188/Cys-197, Cys-201/Cys-234, Cys-210/Cys-228, and Cys-219/Cys-232. The ShKT domain occupies 201-234; the sequence is CTIYNKLTNCDSLLKQSSCQDDWIKSNCPASCFC.

As to expression, expressed by the venom gland.

Its subcellular location is the secreted. In terms of biological role, inhibits calcium-activated potassium channels (KCa1.1/KCNMA1), voltage-gated potassium channel Kv1.3/KCNA3, and the calcium release channel/ryanodine receptor (RyR). Binds specifically to type 1 RyR (RyR1) from skeletal muscle. Inhibit both the binding of ryanodine to RyR1, and RyR1's calcium-channel activity. Inhibits carbachol-induced muscle contraction and weakly blocks muscle contraction evoked by potassium. The sequence is that of Cysteine-rich venom protein natrin-1 from Naja atra (Chinese cobra).